A 178-amino-acid chain; its full sequence is Large ribosomal subunit protein uL6 (178 aa).

Belongs to the universal ribosomal protein uL6 family. Part of the 50S ribosomal subunit.

Functionally, this protein binds to the 23S rRNA, and is important in its secondary structure. It is located near the subunit interface in the base of the L7/L12 stalk, and near the tRNA binding site of the peptidyltransferase center. This chain is Large ribosomal subunit protein uL6, found in Geobacillus kaustophilus (strain HTA426).